Consider the following 192-residue polypeptide: MFLHLILLAGLAPVVYLWCTPFIACNQTVYGDFSDIEKGMKVILLGRPFQKMDQLIITGEYYNNGSEVMDDAAFTVGLSKGLIMHQLGMDDLEQYLLTTTLGASEERMNISGKLLGRKKDTFLIVEKAKPNVTCADPFTFVIKSQDGYGFAFGSVQSSELKYTAQVALQYPKNEQSQSVFFDGKIKTSKIEL.

An N-terminal signal peptide occupies residues 1 to 17 (MFLHLILLAGLAPVVYL).

This is an uncharacterized protein from Caenorhabditis elegans.